A 351-amino-acid chain; its full sequence is Phosphoribosylformylglycinamidine cyclo-ligase (351 aa).

This sequence belongs to the AIR synthase family.

The protein resides in the cytoplasm. It catalyses the reaction 2-formamido-N(1)-(5-O-phospho-beta-D-ribosyl)acetamidine + ATP = 5-amino-1-(5-phospho-beta-D-ribosyl)imidazole + ADP + phosphate + H(+). The protein operates within purine metabolism; IMP biosynthesis via de novo pathway; 5-amino-1-(5-phospho-D-ribosyl)imidazole from N(2)-formyl-N(1)-(5-phospho-D-ribosyl)glycinamide: step 2/2. In Burkholderia pseudomallei (strain 1710b), this protein is Phosphoribosylformylglycinamidine cyclo-ligase.